The following is a 424-amino-acid chain: Elongation factor 1-alpha (424 aa).

The region spanning 5 to 223 (KPHLNLITIG…DAFKVPEKPI (219 aa)) is the tr-type G domain. Residues 14-21 (GHVDHGKS) form a G1 region. Residue 14-21 (GHVDHGKS) coordinates GTP. Ser-21 is a Mg(2+) binding site. The G2 stretch occupies residues 70–74 (GVTID). A G3 region spans residues 91–94 (DAPG). GTP-binding positions include 91 to 95 (DAPGH) and 148 to 151 (NKMD). Residues 148 to 151 (NKMD) form a G4 region. The tract at residues 187–189 (SGY) is G5.

This sequence belongs to the TRAFAC class translation factor GTPase superfamily. Classic translation factor GTPase family. EF-Tu/EF-1A subfamily.

It is found in the cytoplasm. It carries out the reaction GTP + H2O = GDP + phosphate + H(+). GTP hydrolase that promotes the GTP-dependent binding of aminoacyl-tRNA to the A-site of ribosomes during protein biosynthesis. The polypeptide is Elongation factor 1-alpha (Thermoplasma acidophilum (strain ATCC 25905 / DSM 1728 / JCM 9062 / NBRC 15155 / AMRC-C165)).